Here is a 521-residue protein sequence, read N- to C-terminus: GMP synthase [glutamine-hydrolyzing] (521 aa).

A Glutamine amidotransferase type-1 domain is found at 5 to 197; sequence KILILDFGSQ…VLDICGAQPG (193 aa). C81 functions as the Nucleophile in the catalytic mechanism. Residues H171 and E173 contribute to the active site. Positions 198 to 390 constitute a GMPS ATP-PPase domain; it reads WTMPNYIEEA…LGLPREMVYR (193 aa). 225–231 serves as a coordination point for ATP; that stretch reads SGGVDSS.

As to quaternary structure, homodimer.

It catalyses the reaction XMP + L-glutamine + ATP + H2O = GMP + L-glutamate + AMP + diphosphate + 2 H(+). It functions in the pathway purine metabolism; GMP biosynthesis; GMP from XMP (L-Gln route): step 1/1. Its function is as follows. Catalyzes the synthesis of GMP from XMP. This chain is GMP synthase [glutamine-hydrolyzing] (guaA), found in Neisseria meningitidis serogroup A / serotype 4A (strain DSM 15465 / Z2491).